The following is a 616-amino-acid chain: Dihydroxy-acid dehydratase (616 aa).

Residue Asp-81 coordinates Mg(2+). Residue Cys-122 participates in [2Fe-2S] cluster binding. Residues Asp-123 and Lys-124 each contribute to the Mg(2+) site. N6-carboxylysine is present on Lys-124. Residue Cys-195 coordinates [2Fe-2S] cluster. Position 491 (Glu-491) interacts with Mg(2+). Residue Ser-517 is the Proton acceptor of the active site.

This sequence belongs to the IlvD/Edd family. In terms of assembly, homodimer. Requires [2Fe-2S] cluster as cofactor. The cofactor is Mg(2+).

The enzyme catalyses (2R)-2,3-dihydroxy-3-methylbutanoate = 3-methyl-2-oxobutanoate + H2O. It catalyses the reaction (2R,3R)-2,3-dihydroxy-3-methylpentanoate = (S)-3-methyl-2-oxopentanoate + H2O. It participates in amino-acid biosynthesis; L-isoleucine biosynthesis; L-isoleucine from 2-oxobutanoate: step 3/4. Its pathway is amino-acid biosynthesis; L-valine biosynthesis; L-valine from pyruvate: step 3/4. Functions in the biosynthesis of branched-chain amino acids. Catalyzes the dehydration of (2R,3R)-2,3-dihydroxy-3-methylpentanoate (2,3-dihydroxy-3-methylvalerate) into 2-oxo-3-methylpentanoate (2-oxo-3-methylvalerate) and of (2R)-2,3-dihydroxy-3-methylbutanoate (2,3-dihydroxyisovalerate) into 2-oxo-3-methylbutanoate (2-oxoisovalerate), the penultimate precursor to L-isoleucine and L-valine, respectively. The protein is Dihydroxy-acid dehydratase of Shewanella woodyi (strain ATCC 51908 / MS32).